A 110-amino-acid polypeptide reads, in one-letter code: METIAKHRHARSSAQKVRLVADLIRGKKVSQALETLAYTNKKAAGLVKKVLESAIANAEHNDGADIDDLKVTKIFVDEGPSMKRIMPRAKGRADRILKRTSHITVVVSDR.

The protein belongs to the universal ribosomal protein uL22 family. As to quaternary structure, part of the 50S ribosomal subunit.

In terms of biological role, this protein binds specifically to 23S rRNA; its binding is stimulated by other ribosomal proteins, e.g. L4, L17, and L20. It is important during the early stages of 50S assembly. It makes multiple contacts with different domains of the 23S rRNA in the assembled 50S subunit and ribosome. Its function is as follows. The globular domain of the protein is located near the polypeptide exit tunnel on the outside of the subunit, while an extended beta-hairpin is found that lines the wall of the exit tunnel in the center of the 70S ribosome. The protein is Large ribosomal subunit protein uL22 of Yersinia enterocolitica serotype O:8 / biotype 1B (strain NCTC 13174 / 8081).